A 219-amino-acid chain; its full sequence is Ras-related protein Rab-3D (219 aa).

Ala2 is subject to N-acetylalanine. Residue 29-37 (GNSSVGKTS) participates in GDP binding. Residues Ser31, Ser32, Val33, Gly34, Lys35, Thr36, Ser37, Pro49, and Ser53 each coordinate GTP. Thr36 is a Mg(2+) binding site. Residues 49–58 (PAFVSTVGID) carry the Switch 1 motif. Residues Thr54 and Asp77 each coordinate Mg(2+). Residue Gly80 participates in GTP binding. A Switch 2 motif is present at residues 80–96 (GQERYRTITTAYYRGAM). Thr86 bears the Phosphothreonine; by LRRK2 mark. Positions 135, 136, 138, 166, and 167 each coordinate GTP. Residues 135–138 (NKCD) and 165–167 (SAK) each bind GDP. At Ser190 the chain carries Phosphoserine. Low complexity predominate over residues 190–199 (SLEPSSSSGS). A disordered region spans residues 190-219 (SLEPSSSSGSNGKGPAVGDAPAPQPSSCSC). 2 S-geranylgeranyl cysteine lipidation sites follow: Cys217 and Cys219. Cys219 carries the post-translational modification Cysteine methyl ester.

Belongs to the small GTPase superfamily. Rab family. As to quaternary structure, interacts with RIMS1, RIMS2, RPH3A, RPH3AL and RAB3IP. The GTP-bound form interacts with REP15. Interacts with CHM and CHML; phosphorylation at Thr-86 disrupts these interactions. Interacts with MADD (via uDENN domain); the GTP-bound form is preferred for interaction. It depends on Mg(2+) as a cofactor. Phosphorylation of Thr-86 in the switch II region by LRRK2 prevents the association of RAB regulatory proteins, including CHM and CHML. As to expression, highly expressed in granulocytes of peripheral blood. Constitutively expressed at low levels in all hematopoietic cell lines investigated.

The protein resides in the cell membrane. The enzyme catalyses GTP + H2O = GDP + phosphate + H(+). With respect to regulation, regulated by guanine nucleotide exchange factors (GEFs) which promote the exchange of bound GDP for free GTP. Regulated by GTPase activating proteins (GAPs) which increase the GTP hydrolysis activity. Inhibited by GDP dissociation inhibitors (GDIs) which prevent Rab-GDP dissociation. Functionally, the small GTPases Rab are key regulators of intracellular membrane trafficking, from the formation of transport vesicles to their fusion with membranes. Rabs cycle between an inactive GDP-bound form and an active GTP-bound form that is able to recruit to membranes different sets of downstream effectors directly responsible for vesicle formation, movement, tethering and fusion. RAB3D may be involved in the insulin-induced exocytosis of GLUT4-containing vesicles in adipocytes. The sequence is that of Ras-related protein Rab-3D from Homo sapiens (Human).